Consider the following 98-residue polypeptide: DNA-binding protein Fis (98 aa).

A DNA-binding region (H-T-H motif) is located at residues 74–93 (QTRAATMMGINRGTLRKKLK).

The protein belongs to the transcriptional regulatory Fis family. In terms of assembly, homodimer.

Functionally, activates ribosomal RNA transcription. Plays a direct role in upstream activation of rRNA promoters. This Vibrio atlanticus (strain LGP32) (Vibrio splendidus (strain Mel32)) protein is DNA-binding protein Fis.